A 617-amino-acid polypeptide reads, in one-letter code: Melatonin-related receptor (617 aa).

Residues 1-30 (MGPTLAVPTPYGCIGCKLPQPEYPPALIIF) are Extracellular-facing. A helical membrane pass occupies residues 31–51 (MFCAMVITIVVDLIGNSMVIL). The Cytoplasmic segment spans residues 52–64 (AVTKNKKLRNSGN). The helical transmembrane segment at 65–85 (IFVVSLSVADMLVAIYPYPLM) threads the bilayer. At 86–103 (LHAMSIGGWDLSQLQCQM) the chain is on the extracellular side. The cysteines at positions 101 and 178 are disulfide-linked. The helical transmembrane segment at 104–124 (VGFITGLSVVGSIFNIVAIAI) threads the bilayer. At 125–143 (NRYCYICHSLQYERIFSVR) the chain is on the cytoplasmic side. The chain crosses the membrane as a helical span at residues 144-164 (NTCIYLVITWIMTVLAVLPNM). The Extracellular portion of the chain corresponds to 165–188 (YIGTIEYDPRTYTCIFNYLNNPVF). The helical transmembrane segment at 189–209 (TVTIVCIHFVLPLLIVGFCYV) threads the bilayer. The Cytoplasmic segment spans residues 210–239 (RIWTKVLAARDPAGQNPDNQLAEVRNFLTM). The helical transmembrane segment at 240-260 (FVIFLLFAVCWCPINVLTVLV) threads the bilayer. Residues 261 to 273 (AVSPKEMAGKIPN) are Extracellular-facing. The chain crosses the membrane as a helical span at residues 274-294 (WLYLAAYFIAYFNSCLNAVIY). The Cytoplasmic portion of the chain corresponds to 295–617 (GLLNENFRRE…VEDDPDEMAV (323 aa)). 2 disordered regions span residues 340 to 438 (AHAR…ATVY) and 464 to 596 (SVHF…VTTS). The segment covering 341 to 353 (HARDQAREQDRAH) has biased composition (basic and acidic residues). Over residues 485–500 (GSHSKSAFSAATSHPK) the composition is skewed to polar residues.

The protein belongs to the G-protein coupled receptor 1 family. In terms of assembly, homodimer, and heterodimer with MTNR1A and MTNR1B. Interacts with KAT5. Interacts with RTN4 isoform A/NOGO-A. Interacts with TGFBR1. As to quaternary structure, interacts with GTF2I. In terms of processing, cleaved by CAPN1 in a calcium-dependent manner. Hypothalamus and pituitary.

It is found in the cell membrane. The protein localises to the postsynaptic density. It localises to the nucleus. Its function is as follows. G protein-coupled receptor that plays a role in numerous physiological processes including regulation of energy metabolism, neurite outgrowth or cell migration. Promotes self-renewal and neuronal differentiation of neural progenitor cells through activation of the NOTCH and WNT/beta-catenin signaling pathways. Modulates the KAT5-dependent glucocorticoid receptor signaling by modulating KAT5 subcellular compartmentalisation. Also plays a role in the activation TGFBR1 in the absence of TGFBR2 by interfering with FKBP1A binding to TGFBR1, leading to induction of both canonical and non-canonical SMAD signaling pathways resulting in inhibition of proliferation or promotion of migration. Upon cleavage by CAPN1, functions as a scaffold in the nucleus for interacting partners such as GTF2I to promote FOS promoter activation. The protein is Melatonin-related receptor (GPR50) of Homo sapiens (Human).